The chain runs to 431 residues: Protein S-Myc (431 aa).

Tyr36 bears the Phosphotyrosine; by Tyr-kinases mark. One can recognise a bHLH domain in the interval 348–400; sequence ERRRNHNRMERQRRDIMRSSFLNLRDLVPELVHNEKAAKVVILKKATEYIHTL. Positions 400 to 421 are leucine-zipper; it reads LQADESKLLVERKKLYERQQQL.

Efficient DNA binding requires dimerization with another bHLH protein.

The protein localises to the nucleus. In terms of biological role, has apoptosis-inducing activity. This Mus musculus (Mouse) protein is Protein S-Myc (Mycs).